Consider the following 462-residue polypeptide: Nuclear factor interleukin-3-regulated protein (462 aa).

Residue Lys24 forms a Glycyl lysine isopeptide (Lys-Gly) (interchain with G-Cter in SUMO2) linkage. The 64-residue stretch at 73–136 folds into the bZIP domain; sequence DAMYWEKRRK…GLISSTAYAQ (64 aa). The segment at 79–95 is basic motif; that stretch reads KRRKNNEAAKRSREKRR. The leucine-zipper stretch occupies residues 99–106; it reads LVLENKLI. 2 disordered regions span residues 189–237 and 258–302; these read DVSE…DDRG and SPPL…IHSP. Over residues 201–210 the composition is skewed to polar residues; that stretch reads ESSVQGSCRS. Residue Lys214 forms a Glycyl lysine isopeptide (Lys-Gly) (interchain with G-Cter in SUMO2) linkage. Lys219 is covalently cross-linked (Glycyl lysine isopeptide (Lys-Gly) (interchain with G-Cter in SUMO1); alternate). Residue Lys219 forms a Glycyl lysine isopeptide (Lys-Gly) (interchain with G-Cter in SUMO2); alternate linkage. A compositionally biased stretch (basic and acidic residues) spans 227–237; it reads SYTREPRDDRG. Positions 264-274 are enriched in polar residues; sequence VNRSSSNSPRT. The tract at residues 299-363 is necessary for transcriptional repression and sufficient for interaction with DR1; that stretch reads IHSPVELKHV…PIDMTSKRHF (65 aa). Phosphoserine is present on Ser301. Glycyl lysine isopeptide (Lys-Gly) (interchain with G-Cter in SUMO2) cross-links involve residues Lys306, Lys314, Lys326, Lys332, Lys337, and Lys350. At Ser353 the chain carries Phosphoserine. Residues Lys360, Lys394, Lys401, Lys406, Lys412, Lys419, Lys424, Lys434, and Lys448 each participate in a glycyl lysine isopeptide (Lys-Gly) (interchain with G-Cter in SUMO2) cross-link.

Belongs to the bZIP family. NFIL3 subfamily. As to quaternary structure, homodimer. Binds DNA as a dimer. Interacts with DR1. Interacts with PER2 and CRY2. Interacts with NR0B2. Interacts with MYSM1. As to expression, expressed in bladder stomach, thyroid, spinal cord, lymph node, trachea, adrenal gland, bone marrow and muscle.

It is found in the nucleus. Acts as a transcriptional regulator that recognizes and binds to the sequence 5'-[GA]TTA[CT]GTAA[CT]-3', a sequence present in many cellular and viral promoters. Represses transcription from promoters with activating transcription factor (ATF) sites. Represses promoter activity in osteoblasts. Represses transcriptional activity of PER1. Represses transcriptional activity of PER2 via the B-site on the promoter. Activates transcription from the interleukin-3 promoter in T-cells. Competes for the same consensus-binding site with PAR DNA-binding factors (DBP, HLF and TEF). Component of the circadian clock that acts as a negative regulator for the circadian expression of PER2 oscillation in the cell-autonomous core clock. Protects pro-B cells from programmed cell death. Represses the transcription of CYP2A5. Positively regulates the expression and activity of CES2 by antagonizing the repressive action of NR1D1 on CES2. Required for the development of natural killer cell precursors. The chain is Nuclear factor interleukin-3-regulated protein (NFIL3) from Homo sapiens (Human).